The primary structure comprises 393 residues: Actin-related protein 2 (393 aa).

ATP is bound by residues 158-160 (GDG), 212-216 (RQMKE), and 303-308 (GGTTMY).

It belongs to the actin family. ARP2 subfamily. In terms of assembly, component of the Arp2/3 complex.

It is found in the cytoplasm. It localises to the cytoskeleton. Functions as ATP-binding component of the Arp2/3 complex which is involved in regulation of actin polymerization and together with an activating nucleation-promoting factor (NPF) mediates the formation of branched actin networks. Seems to contact the pointed end of the daughter actin filament. This Caenorhabditis briggsae protein is Actin-related protein 2 (arx-2).